The following is a 229-amino-acid chain: uncharacterized protein (229 aa).

22-29 (GMIAFGKT) contributes to the ATP binding site.

This is an uncharacterized protein from Mycoplasma pneumoniae (strain ATCC 29342 / M129 / Subtype 1) (Mycoplasmoides pneumoniae).